Here is a 1544-residue protein sequence, read N- to C-terminus: Lysine-specific demethylase 5B (1544 aa).

Over residues 1–14 (MEPATTLPPGPRPA) the composition is skewed to pro residues. The disordered stretch occupies residues 1 to 22 (MEPATTLPPGPRPALPLGGPGP). Positions 32–73 (CPVFEPSWEEFADPFAFIHKIRPIAEQTGICKVRPPPDWQPP) constitute a JmjN domain. Positions 97–187 (TRVKLNFLDQ…ILNPYNLFLS (91 aa)) constitute an ARID domain. Glycyl lysine isopeptide (Lys-Gly) (interchain with G-Cter in SUMO2) cross-links involve residues lysine 148, lysine 204, lysine 209, lysine 242, lysine 274, and lysine 278. Positions 200–228 (TSDTKDKEYKPHDIPQRQSVQPAETCPPA) are disordered. A compositionally biased stretch (basic and acidic residues) spans 202–214 (DTKDKEYKPHDIP). Positions 269–297 (NEKEMKSTIKQEPTEKKDCELESEKEKPK) are disordered. The PHD-type 1 zinc-finger motif lies at 309–359 (LYVCLLCGSGNDEDRLLLCDGCDDSYHTFCLVPPLHDVPKGDWRCPKCLAQ). Residue tyrosine 425 coordinates 2-oxoglutarate. In terms of domain architecture, JmjC spans 453 to 619 (EYLDSGWNLN…LGRQCVEHYR (167 aa)). Fe cation is bound by residues histidine 499 and glutamate 501. 3 residues coordinate 2-oxoglutarate: serine 507, asparagine 509, and lysine 517. Residue histidine 587 coordinates Fe cation. The C5HC2 zinc-finger motif lies at 692 to 744 (CIKCKTTCFMSAISCSCKPGLLVCLHHVKELCSCPPYKYNLRYRYTLDDLYPM). A Glycyl lysine isopeptide (Lys-Gly) (interchain with G-Cter in SUMO2) cross-link involves residue lysine 769. Residue lysine 832 is modified to N6-acetyllysine. Serine 986 carries the phosphoserine modification. The segment at 1176 to 1224 (MKVCLCQKTPATPMIQCELCRDAFHTSCVAAPSISQSSRIWLCPHCRRS) adopts a PHD-type 2 zinc-finger fold. Residues 1297–1314 (QASATDKVSQPPGTTSFS) show a composition bias toward polar residues. Positions 1297-1318 (QASATDKVSQPPGTTSFSLPDD) are disordered. Phosphoserine is present on serine 1328. Positions 1374–1388 (PSSVQQADRSSPVRS) are enriched in polar residues. Positions 1374–1447 (PSSVQQADRS…IKLSHPKDMD (74 aa)) are disordered. A compositionally biased stretch (basic and acidic residues) spans 1389–1427 (SSEKNDCLRGKRDAINSPERKLKRRPEREGLPSERWDRV). Residues 1428 to 1441 (KHMRTPQKKKIKLS) are compositionally biased toward basic residues. Lysine 1450 participates in a covalent cross-link: Glycyl lysine isopeptide (Lys-Gly) (interchain with G-Cter in SUMO2). Residue serine 1456 is modified to Phosphoserine. A PHD-type 3 zinc finger spans residues 1484 to 1538 (DAICPAVSCLQPEGDEVDWVQCDGSCNQWFHQVCVGVSPEMAEKEDYICVRCTGK).

Belongs to the JARID1 histone demethylase family. As to quaternary structure, interacts with FOXG1B, PAX9, MYC, MYCN and RB1. Interacts with HDAC1, HDAC4, HDAC5 and HDAC7. Interacts (via PHD-type 1 zinc finger) with histone H3 unmodified at 'Lys-4'; the interaction is inhibited when histone H3 is methylated at 'Arg-2' or 'Lys-4'. The cofactor is Fe(2+). Present at highest levels in testis, where it is enriched in spermatogonia and pachytene cells (at protein level).

It localises to the nucleus. It carries out the reaction N(6),N(6),N(6)-trimethyl-L-lysyl(4)-[histone H3] + 3 2-oxoglutarate + 3 O2 = L-lysyl(4)-[histone H3] + 3 formaldehyde + 3 succinate + 3 CO2. Functionally, histone demethylase that demethylates 'Lys-4' of histone H3, thereby playing a central role in histone code. Does not demethylate histone H3 'Lys-9' or H3 'Lys-27'. Demethylates trimethylated, dimethylated and monomethylated H3 'Lys-4'. Acts as a transcriptional corepressor for FOXG1B and PAX9. Represses the CLOCK-BMAL1 heterodimer-mediated transcriptional activation of the core clock component PER2. This Mus musculus (Mouse) protein is Lysine-specific demethylase 5B (Kdm5b).